The primary structure comprises 338 residues: Glyceraldehyde-3-phosphate dehydrogenase (338 aa).

NAD(+) contacts are provided by residues 12-13 (RI), D34, and R79. Residues 150 to 152 (SCT), T181, 210 to 211 (TG), and R233 contribute to the D-glyceraldehyde 3-phosphate site. C151 functions as the Nucleophile in the catalytic mechanism. N315 lines the NAD(+) pocket.

It belongs to the glyceraldehyde-3-phosphate dehydrogenase family. As to quaternary structure, homotetramer.

Its subcellular location is the cytoplasm. The catalysed reaction is D-glyceraldehyde 3-phosphate + phosphate + NAD(+) = (2R)-3-phospho-glyceroyl phosphate + NADH + H(+). Its pathway is carbohydrate degradation; glycolysis; pyruvate from D-glyceraldehyde 3-phosphate: step 1/5. The sequence is that of Glyceraldehyde-3-phosphate dehydrogenase (gpd1) from Hypocrea atroviridis (Trichoderma atroviride).